The chain runs to 37 residues: Large ribosomal subunit protein bL36 (37 aa).

It belongs to the bacterial ribosomal protein bL36 family.

This chain is Large ribosomal subunit protein bL36, found in Synechococcus sp. (strain RCC307).